A 430-amino-acid polypeptide reads, in one-letter code: ATP-dependent RNA helicase cgh-1 (430 aa).

A Q motif motif is present at residues 43–71; sequence VEFEDFCLGRDLLMGIFEKGWEKPSPIQE. In terms of domain architecture, Helicase ATP-binding spans 74-244; it reads IGVALTGQDI…QKHMHKPYEI (171 aa). 87-94 is an ATP binding site; that stretch reads AKNGTGKT. The DEAD box signature appears at 192–195; that stretch reads DEAD. Residues 254-414 form the Helicase C-terminal domain; it reads GVTQYYAFVQ…PIPKTVDPKL (161 aa).

The protein belongs to the DEAD box helicase family. DDX6/DHH1 subfamily. Interacts with car-1 in a germline ribonucleoprotein complex. Interacts with ifet-1. Interacts with oma-1, which is a component of a ribonucleoprotein complex, in an RNA-dependent manner. Expression is restricted to two germline precursors Z2 and Z3 in L1 stage hermaphrodites, and is detectable specifically in the gonad at low levels into the L3 stage. Expression is significantly higher during the early L4 stage. In adults, expression remains gonad-specific and was not apparent in the somatically derived uterus. Expressed in germ granules (P granules); when associated with pgl-1.

The protein localises to the cytoplasm. The enzyme catalyses ATP + H2O = ADP + phosphate + H(+). Functionally, probable RNA helicase required for oocyte and sperm function. Also required to prevent the physiological germline apoptosis mechanism killing essentially all developing oocytes. The chain is ATP-dependent RNA helicase cgh-1 (cgh-1) from Caenorhabditis elegans.